A 659-amino-acid polypeptide reads, in one-letter code: PAN2-PAN3 deadenylation complex subunit PAN3 (659 aa).

Disordered stretches follow at residues 1–26 (MASAGKPALDDSRRGTGSPKMKAREN) and 103–132 (PKAANAAPFQPRSVASRSNTSTPNSRQENI). The C3H1-type zinc-finger motif lies at 26–55 (NAKDTLCRNVTIYGRCRYEDKGCAFNHDPL). Polar residues predominate over residues 115–132 (SVASRSNTSTPNSRQENI). Residues 262-522 (QTLPNTQLPA…NIDIFITGIS (261 aa)) are pseudokinase domain. ATP is bound by residues Arg314, 363 to 370 (DYYPLSKT), and 422 to 423 (SK). The stretch at 523–561 (SQLMSTFDSALHLDDQLTSDLSRELENGRLVRLMTKLNL) forms a coiled coil. The tract at residues 562-659 (VNERPEYEHD…ALLKPARRMH (98 aa)) is knob domain.

This sequence belongs to the protein kinase superfamily. PAN3 family. In terms of assembly, homodimer. Forms a heterotrimer with a catalytic subunit pan2 to form the poly(A)-nuclease (PAN) deadenylation complex. Interacts (via PAM-2 motif) with poly(A)-binding protein pab1 (via PABC domain), conferring substrate specificity of the enzyme complex.

It localises to the cytoplasm. In terms of biological role, regulatory subunit of the poly(A)-nuclease (PAN) deadenylation complex, one of two cytoplasmic mRNA deadenylases involved in mRNA turnover. PAN specifically shortens poly(A) tails of RNA and the activity is stimulated by poly(A)-binding protein pab1. PAN deadenylation is followed by rapid degradation of the shortened mRNA tails by the CCR4-NOT complex. Deadenylated mRNAs are then degraded by two alternative mechanisms, namely exosome-mediated 3'-5' exonucleolytic degradation, or deadenylation-dependent mRNA decaping and subsequent 5'-3' exonucleolytic degradation by xrn1. May also be involved in post-transcriptional maturation of mRNA poly(A) tails. pan3 acts as a positive regulator for PAN activity, recruiting the catalytic subunit pan2 to mRNA via its interaction with RNA and with pab1. This chain is PAN2-PAN3 deadenylation complex subunit PAN3, found in Aspergillus clavatus (strain ATCC 1007 / CBS 513.65 / DSM 816 / NCTC 3887 / NRRL 1 / QM 1276 / 107).